The following is a 267-amino-acid chain: Proteasome subunit alpha (267 aa).

The segment at Glu-231–Asp-267 is disordered. Basic and acidic residues predominate over residues Leu-234–Asp-267.

Belongs to the peptidase T1A family. The 20S proteasome core is composed of 14 alpha and 14 beta subunits that assemble into four stacked heptameric rings, resulting in a barrel-shaped structure. The two inner rings, each composed of seven catalytic beta subunits, are sandwiched by two outer rings, each composed of seven alpha subunits. The catalytic chamber with the active sites is on the inside of the barrel. Has a gated structure, the ends of the cylinder being occluded by the N-termini of the alpha-subunits. Is capped by the proteasome-associated ATPase, ARC.

It is found in the cytoplasm. It participates in protein degradation; proteasomal Pup-dependent pathway. With respect to regulation, the formation of the proteasomal ATPase ARC-20S proteasome complex, likely via the docking of the C-termini of ARC into the intersubunit pockets in the alpha-rings, may trigger opening of the gate for substrate entry. Interconversion between the open-gate and close-gate conformations leads to a dynamic regulation of the 20S proteasome proteolysis activity. In terms of biological role, component of the proteasome core, a large protease complex with broad specificity involved in protein degradation. In Mycobacterium marinum (strain ATCC BAA-535 / M), this protein is Proteasome subunit alpha.